Here is a 242-residue protein sequence, read N- to C-terminus: Probable 2-phosphosulfolactate phosphatase (242 aa).

Belongs to the ComB family. Mg(2+) is required as a cofactor.

It carries out the reaction (2R)-O-phospho-3-sulfolactate + H2O = (2R)-3-sulfolactate + phosphate. The protein is Probable 2-phosphosulfolactate phosphatase of Caldicellulosiruptor saccharolyticus (strain ATCC 43494 / DSM 8903 / Tp8T 6331).